We begin with the raw amino-acid sequence, 159 residues long: Histone H1 (159 aa).

3 disordered regions span residues 1–31, 80–99, and 132–159; these read MAEK…ITEL, KGAE…KKEK, and AAKK…KKKS. Residues 10 to 22 are compositionally biased toward basic residues; the sequence is VTTKKPAATHRRR. In terms of domain architecture, H15 spans 12–102; that stretch reads TKKPAATHRR…GEGKKEKEKA (91 aa). Residues 84–93 are compositionally biased toward gly residues; the sequence is CAGGQGTGVG. The segment covering 134–148 has biased composition (basic residues); it reads KKVKAAPKKAKKPVK. A compositionally biased stretch (basic and acidic residues) spans 149 to 159; it reads KTTEKKEKKKS.

The protein belongs to the histone H1/H5 family.

The protein resides in the nucleus. The protein localises to the chromosome. Its function is as follows. Histones H1 are necessary for the condensation of nucleosome chains into higher-order structures. The polypeptide is Histone H1 (Psammechinus miliaris (Green sea urchin)).